Here is a 58-residue protein sequence, read N- to C-terminus: Large ribosomal subunit protein bL32 (58 aa).

Basic residues predominate over residues 1 to 19 (MAVPKKRTSKSKKNMRKAN). Positions 1 to 58 (MAVPKKRTSKSKKNMRKANWKNQAKLAAKKALSLGKSVETQRSHSFVHPRYEEEEEED) are disordered. Positions 20–32 (WKNQAKLAAKKAL) are enriched in low complexity.

The protein belongs to the bacterial ribosomal protein bL32 family.

This chain is Large ribosomal subunit protein bL32, found in Trichodesmium erythraeum (strain IMS101).